A 237-amino-acid polypeptide reads, in one-letter code: DNA repair protein RecO (237 aa).

This sequence belongs to the RecO family.

Involved in DNA repair and RecF pathway recombination. The protein is DNA repair protein RecO of Cereibacter sphaeroides (strain ATCC 17025 / ATH 2.4.3) (Rhodobacter sphaeroides).